Reading from the N-terminus, the 679-residue chain is Acetyl-coenzyme A synthetase 2 (679 aa).

Residues methionine 1–glutamine 32 form a disordered region. Over residues asparagine 14 to proline 30 the composition is skewed to basic and acidic residues. Residues arginine 207–lysine 210 and threonine 326 contribute to the CoA site. ATP-binding positions include glycine 402–proline 404, aspartate 426–threonine 431, aspartate 517, and arginine 532. Residue serine 540 coordinates CoA. Arginine 543 is a binding site for ATP. Arginine 611 contacts CoA.

The protein belongs to the ATP-dependent AMP-binding enzyme family.

The catalysed reaction is acetate + ATP + CoA = acetyl-CoA + AMP + diphosphate. The protein is Acetyl-coenzyme A synthetase 2 (ACS2) of Debaryomyces hansenii (strain ATCC 36239 / CBS 767 / BCRC 21394 / JCM 1990 / NBRC 0083 / IGC 2968) (Yeast).